Here is a 446-residue protein sequence, read N- to C-terminus: Exodeoxyribonuclease 7 large subunit (446 aa).

Belongs to the XseA family. Heterooligomer composed of large and small subunits.

The protein resides in the cytoplasm. The catalysed reaction is Exonucleolytic cleavage in either 5'- to 3'- or 3'- to 5'-direction to yield nucleoside 5'-phosphates.. In terms of biological role, bidirectionally degrades single-stranded DNA into large acid-insoluble oligonucleotides, which are then degraded further into small acid-soluble oligonucleotides. This chain is Exodeoxyribonuclease 7 large subunit, found in Streptococcus pneumoniae (strain ATCC 700669 / Spain 23F-1).